The chain runs to 127 residues: Fatty acid binding protein 1-A, liver (127 aa).

This sequence belongs to the calycin superfamily. Fatty-acid binding protein (FABP) family. In terms of tissue distribution, in adults, weakly expressed in the intestine.

Its subcellular location is the cytoplasm. Binds free fatty acids and their coenzyme A derivatives, bilirubin, and some other small molecules in the cytoplasm. May be involved in intracellular lipid transport. This is Fatty acid binding protein 1-A, liver from Danio rerio (Zebrafish).